The sequence spans 100 residues: Urease subunit gamma (100 aa).

This sequence belongs to the urease gamma subunit family. Heterotrimer of UreA (gamma), UreB (beta) and UreC (alpha) subunits. Three heterotrimers associate to form the active enzyme.

It is found in the cytoplasm. It carries out the reaction urea + 2 H2O + H(+) = hydrogencarbonate + 2 NH4(+). The protein operates within nitrogen metabolism; urea degradation; CO(2) and NH(3) from urea (urease route): step 1/1. This chain is Urease subunit gamma, found in Aliivibrio fischeri (strain ATCC 700601 / ES114) (Vibrio fischeri).